The following is a 307-amino-acid chain: Acetaldehyde dehydrogenase 2 (307 aa).

The active-site Acyl-thioester intermediate is C131. NAD(+)-binding positions include 162-170 (SVGPGTRKN) and N273.

The protein belongs to the acetaldehyde dehydrogenase family.

The catalysed reaction is acetaldehyde + NAD(+) + CoA = acetyl-CoA + NADH + H(+). In Comamonas testosteroni (Pseudomonas testosteroni), this protein is Acetaldehyde dehydrogenase 2 (aphF).